We begin with the raw amino-acid sequence, 753 residues long: Nuclear hormone receptor family member daf-12 (753 aa).

The disordered stretch occupies residues 1–109; the sequence is MGTNGGVIAE…PDDGLLDSSE (109 aa). Positions 20-29 are enriched in basic and acidic residues; sequence NPDKVEEPVV. Residues 30–44 are compositionally biased toward basic residues; it reads RRKRVTRRRHRRIHS. The nuclear receptor DNA-binding region spans 115–190; that stretch reads QKTCRVCGDH…VGMKKEWILN (76 aa). NR C4-type zinc fingers lie at residues 118–138 and 154–173; these read CRVCGDHATGYNFNVITCESC and CPYSEDCEINSVSRRFCQKC. The short motif at 191-206 is the Nuclear localization signal element; that stretch reads EEQLRRRKNSRLNNTG. 3 disordered regions span residues 198 to 251, 266 to 314, and 376 to 410; these read KNSR…TINP, NAMP…GYDP, and GHPMPAETTPPYSAPMSDMSLSRHNSTSSGTEKNH. A compositionally biased stretch (polar residues) spans 201-211; sequence RLNNTGTCNKR. Over residues 212 to 227 the composition is skewed to low complexity; that stretch reads SQPGNQQSPQGPNQQP. 2 stretches are compositionally biased toward polar residues: residues 285–301 and 394–410; these read PVGSSASDSPPNRSLTM and MSLSRHNSTSSGTEKNH. The region spanning 516-753 is the NR LBD domain; that stretch reads AELKALDAVR…ELPGEFFKIK (238 aa).

It belongs to the nuclear hormone receptor family. In terms of assembly, interacts with din-1 isoform d. In terms of tissue distribution, expressed throughout muscles of the pharynx. Expressed in epidermal seam cells, the vulva, head neurons, mature spermatheca, uterus and intestine.

It localises to the nucleus. Nuclear receptor which binds directly to response elements in target gene promoters. Activity is modulated by binding of steroid hormone ligands that include dafachronic acids. Regulates expression of genes involved in postembryonic development and the dauer diapause, in response to environmental cues. Inhibits the expression of let-7 family members when bound to corepressor din-1s which is an isoform of din-1. Plays a role in controlling the timing of seam cell development during the larval stages. Has a role in the immune response to bacterial infection, via regulation of let-7 miRNAs. Controls expression of genes that promote the aerobic catabolism of fatty acids for reproductive growth. May be involved in thermotolerance. The polypeptide is Nuclear hormone receptor family member daf-12 (Caenorhabditis elegans).